We begin with the raw amino-acid sequence, 202 residues long: Orotate phosphoribosyltransferase (202 aa).

113-121 (EDIITTGGS) contributes to the 5-phospho-alpha-D-ribose 1-diphosphate binding site. Threonine 117 and arginine 145 together coordinate orotate.

Belongs to the purine/pyrimidine phosphoribosyltransferase family. PyrE subfamily. As to quaternary structure, homodimer. Mg(2+) serves as cofactor.

It catalyses the reaction orotidine 5'-phosphate + diphosphate = orotate + 5-phospho-alpha-D-ribose 1-diphosphate. It functions in the pathway pyrimidine metabolism; UMP biosynthesis via de novo pathway; UMP from orotate: step 1/2. Functionally, catalyzes the transfer of a ribosyl phosphate group from 5-phosphoribose 1-diphosphate to orotate, leading to the formation of orotidine monophosphate (OMP). This is Orotate phosphoribosyltransferase from Sulfurimonas denitrificans (strain ATCC 33889 / DSM 1251) (Thiomicrospira denitrificans (strain ATCC 33889 / DSM 1251)).